Consider the following 207-residue polypeptide: Peptidyl-tRNA hydrolase (207 aa).

Tyr14 provides a ligand contact to tRNA. His19 functions as the Proton acceptor in the catalytic mechanism. TRNA contacts are provided by Tyr64, Asn66, and Asn112.

This sequence belongs to the PTH family. In terms of assembly, monomer.

The protein resides in the cytoplasm. It catalyses the reaction an N-acyl-L-alpha-aminoacyl-tRNA + H2O = an N-acyl-L-amino acid + a tRNA + H(+). Functionally, hydrolyzes ribosome-free peptidyl-tRNAs (with 1 or more amino acids incorporated), which drop off the ribosome during protein synthesis, or as a result of ribosome stalling. Catalyzes the release of premature peptidyl moieties from peptidyl-tRNA molecules trapped in stalled 50S ribosomal subunits, and thus maintains levels of free tRNAs and 50S ribosomes. The chain is Peptidyl-tRNA hydrolase from Rhodopseudomonas palustris (strain HaA2).